Consider the following 361-residue polypeptide: Thermostable alkaline protease (361 aa).

The signal sequence occupies residues 1–24; it reads MRQSLKVMVLSTVALLFMANPAAA. Positions 25-93 are excised as a propeptide; it reads SEEKKEYLIV…IEKNAEVTIS (69 aa). Residue Gln94 coordinates Ca(2+). Residues 97 to 360 enclose the Peptidase S8 domain; sequence PWGISFINTQ…NGLVHAGRAT (264 aa). The active-site Charge relay system is the Asp124. Asp132 is a binding site for Ca(2+). His154 serves as the catalytic Charge relay system. Residues Leu165, Asn167, Ile169, Val171, Ala255, Tyr257, and Val260 each coordinate Ca(2+). Ser307 functions as the Charge relay system in the catalytic mechanism.

The protein belongs to the peptidase S8 family. The cofactor is Ca(2+).

Its subcellular location is the secreted. Shows keratinolytic activity. This chain is Thermostable alkaline protease, found in Halalkalibacterium halodurans (strain ATCC BAA-125 / DSM 18197 / FERM 7344 / JCM 9153 / C-125) (Bacillus halodurans).